The sequence spans 50 residues: Small ribosomal subunit protein uS14 (50 aa).

The Zn(2+) site is built by cysteine 15, cysteine 18, cysteine 33, and cysteine 36.

It belongs to the universal ribosomal protein uS14 family. Zinc-binding uS14 subfamily. As to quaternary structure, part of the 30S ribosomal subunit. Zn(2+) serves as cofactor.

In terms of biological role, binds 16S rRNA, required for the assembly of 30S particles. This Methanosarcina barkeri (strain Fusaro / DSM 804) protein is Small ribosomal subunit protein uS14.